The sequence spans 430 residues: Adenylosuccinate synthetase (430 aa).

GTP-binding positions include 12-18 (GDEGKGK) and 40-42 (GHT). Residue D13 is the Proton acceptor of the active site. The Mg(2+) site is built by D13 and G40. IMP-binding positions include 13 to 16 (DEGK), 38 to 41 (NAGH), T130, R144, Q224, T239, and R303. The active-site Proton donor is the H41. Position 299–305 (299–305 (ATTGRPR)) interacts with substrate. GTP contacts are provided by residues R305, 331-333 (KLD), and 413-415 (SVG).

Belongs to the adenylosuccinate synthetase family. In terms of assembly, homodimer. It depends on Mg(2+) as a cofactor.

The protein resides in the cytoplasm. It catalyses the reaction IMP + L-aspartate + GTP = N(6)-(1,2-dicarboxyethyl)-AMP + GDP + phosphate + 2 H(+). It functions in the pathway purine metabolism; AMP biosynthesis via de novo pathway; AMP from IMP: step 1/2. Plays an important role in the de novo pathway of purine nucleotide biosynthesis. Catalyzes the first committed step in the biosynthesis of AMP from IMP. In Trichlorobacter lovleyi (strain ATCC BAA-1151 / DSM 17278 / SZ) (Geobacter lovleyi), this protein is Adenylosuccinate synthetase.